The following is a 212-amino-acid chain: Sentrin-specific protease 8 (212 aa).

M1 is subject to N-acetylmethionine. The segment at 11–174 (SLLRQSDVSL…MYVICNTEAL (164 aa)) is protease. Active-site residues include H102 and D119. The active-site Nucleophile is the C163.

The protein belongs to the peptidase C48 family. As to expression, broadly expressed, with highest levels in kidney and pancreas.

Protease that catalyzes two essential functions in the NEDD8 pathway: processing of full-length NEDD8 to its mature form and deconjugation of NEDD8 from targeted proteins such as cullins or p53. In Homo sapiens (Human), this protein is Sentrin-specific protease 8 (SENP8).